An 88-amino-acid polypeptide reads, in one-letter code: Transmembrane protein 069R (88 aa).

A run of 2 helical transmembrane segments spans residues 30-50 and 67-87; these read ALWPPALAYAASVAAGYVFTA and VGVFLGVLCALYNWMGSGDSF.

It is found in the host membrane. This Frog virus 3 (isolate Goorha) (FV-3) protein is Transmembrane protein 069R.